A 205-amino-acid chain; its full sequence is Ribonuclease HII (205 aa).

The 190-residue stretch at 16 to 205 (VSEVGIDEVG…KSFLKKSNLF (190 aa)) folds into the RNase H type-2 domain. Positions 22, 23, and 118 each coordinate a divalent metal cation.

Belongs to the RNase HII family. Mn(2+) serves as cofactor. Requires Mg(2+) as cofactor.

The protein resides in the cytoplasm. It catalyses the reaction Endonucleolytic cleavage to 5'-phosphomonoester.. Its function is as follows. Endonuclease that specifically degrades the RNA of RNA-DNA hybrids. The protein is Ribonuclease HII of Prochlorococcus marinus (strain MIT 9215).